We begin with the raw amino-acid sequence, 118 residues long: UPF0102 protein Bcav_2532 (118 aa).

Belongs to the UPF0102 family.

This chain is UPF0102 protein Bcav_2532, found in Beutenbergia cavernae (strain ATCC BAA-8 / DSM 12333 / CCUG 43141 / JCM 11478 / NBRC 16432 / NCIMB 13614 / HKI 0122).